The following is a 37-amino-acid chain: Cytochrome b6-f complex subunit 5 (37 aa).

Residues 5 to 25 (LLSGIVLGLVPVTIAGLFVTA) traverse the membrane as a helical segment.

It belongs to the PetG family. As to quaternary structure, the 4 large subunits of the cytochrome b6-f complex are cytochrome b6, subunit IV (17 kDa polypeptide, PetD), cytochrome f and the Rieske protein, while the 4 small subunits are PetG, PetL, PetM and PetN. The complex functions as a dimer.

It is found in the plastid. The protein resides in the chloroplast thylakoid membrane. In terms of biological role, component of the cytochrome b6-f complex, which mediates electron transfer between photosystem II (PSII) and photosystem I (PSI), cyclic electron flow around PSI, and state transitions. PetG is required for either the stability or assembly of the cytochrome b6-f complex. This chain is Cytochrome b6-f complex subunit 5, found in Stigeoclonium helveticum (Green alga).